A 349-amino-acid polypeptide reads, in one-letter code: Thiamine-phosphate synthase (349 aa).

Residues 1-125 are unknown; sequence MGCESSLDPR…SAEAAAIRYG (125 aa). The segment at 63–85 is disordered; that stretch reads RARSTVTDPGAGMEHPAQLDRHS. Residues 126 to 349 form a thiamine-phosphate synthase region; sequence LYDLEVTCLT…LLSSLSRPTL (224 aa). 4-amino-2-methyl-5-(diphosphooxymethyl)pyrimidine is bound by residues 177–181 and asparagine 209; that span reads QHRCK. Mg(2+) is bound by residues aspartate 210 and aspartate 229. 4-amino-2-methyl-5-(diphosphooxymethyl)pyrimidine is bound by residues serine 248 and lysine 277. Glycine 304 serves as a coordination point for 2-[(2R,5Z)-2-carboxy-4-methylthiazol-5(2H)-ylidene]ethyl phosphate.

This sequence belongs to the thiamine-phosphate synthase family. Requires Mg(2+) as cofactor.

It catalyses the reaction 2-[(2R,5Z)-2-carboxy-4-methylthiazol-5(2H)-ylidene]ethyl phosphate + 4-amino-2-methyl-5-(diphosphooxymethyl)pyrimidine + 2 H(+) = thiamine phosphate + CO2 + diphosphate. The enzyme catalyses 2-(2-carboxy-4-methylthiazol-5-yl)ethyl phosphate + 4-amino-2-methyl-5-(diphosphooxymethyl)pyrimidine + 2 H(+) = thiamine phosphate + CO2 + diphosphate. It carries out the reaction 4-methyl-5-(2-phosphooxyethyl)-thiazole + 4-amino-2-methyl-5-(diphosphooxymethyl)pyrimidine + H(+) = thiamine phosphate + diphosphate. It participates in cofactor biosynthesis; thiamine diphosphate biosynthesis; thiamine phosphate from 4-amino-2-methyl-5-diphosphomethylpyrimidine and 4-methyl-5-(2-phosphoethyl)-thiazole: step 1/1. Condenses 4-methyl-5-(beta-hydroxyethyl)thiazole monophosphate (THZ-P) and 2-methyl-4-amino-5-hydroxymethyl pyrimidine pyrophosphate (HMP-PP) to form thiamine monophosphate (TMP). In Parasynechococcus marenigrum (strain WH8102), this protein is Thiamine-phosphate synthase.